Reading from the N-terminus, the 204-residue chain is MSMRLSIRTLIILAHVCLFITTTTIAQFVLDTVGEPVEGDEEYFIRPVITNKGGRSTMVSRNESCPLHVGLELTGLGRGLVVKFTPFAPHHDFDDVRVNRDLRITFQASSSCVQSTEWRLGEKDTKSGRRLIITGTDSATNGSYGNFFRIVETPLEGMYNIQWCPTEVCPSCKFECGTVDMLNENGKILLALDGGPLPLVFQKE.

The signal sequence occupies residues 1–26 (MSMRLSIRTLIILAHVCLFITTTTIA). Asn62 is a glycosylation site (N-linked (GlcNAc...) asparagine). A disulfide bridge connects residues Cys65 and Cys112. N-linked (GlcNAc...) asparagine glycosylation occurs at Asn141. Intrachain disulfides connect Cys164–Cys176 and Cys169–Cys172.

The protein belongs to the protease inhibitor I3 (leguminous Kunitz-type inhibitor) family. In terms of assembly, interacts with SCP1 and CP. As to expression, expressed at low levels in non-mycorrhizal roots.

Its subcellular location is the secreted. It localises to the extracellular space. The protein resides in the apoplast. In terms of biological role, protease inhibitor that, together with SCP1, controls mycorrhiza establishment and arbuscule development during root colonization by arbuscular mycorrhizal (AM) fungi (e.g. Rhizophagus irregularis), probably by degrading SCP1 in the apoplast of the periarbuscular region. This chain is Kunitz type trypsin inhibitor 106, found in Medicago truncatula (Barrel medic).